The sequence spans 77 residues: Defensin-like protein 4 (77 aa).

Residues Met1 to Ala30 form the signal peptide. 4 disulfide bridges follow: Cys33–Cys77, Cys44–Cys64, Cys50–Cys71, and Cys54–Cys73.

This sequence belongs to the DEFL family. Expressed in roots, siliques and seeds.

Its subcellular location is the secreted. Its function is as follows. Confers broad-spectrum resistance to pathogens. This chain is Defensin-like protein 4 (PDF2.1), found in Arabidopsis thaliana (Mouse-ear cress).